The chain runs to 483 residues: Replication factor C large subunit (483 aa).

44–51 (GSPGVGKT) contacts ATP. The segment at 415 to 483 (AVDHGGGIFA…DGQAGLSDFM (69 aa)) is disordered. Acidic residues predominate over residues 430–443 (AQSDTESDDDDDGD). Residues 451–463 (DEPKEESVNREQS) show a composition bias toward basic and acidic residues.

Belongs to the activator 1 small subunits family. RfcL subfamily. As to quaternary structure, heteromultimer composed of small subunits (RfcS) and large subunits (RfcL).

In terms of biological role, part of the RFC clamp loader complex which loads the PCNA sliding clamp onto DNA. The sequence is that of Replication factor C large subunit from Natronomonas pharaonis (strain ATCC 35678 / DSM 2160 / CIP 103997 / JCM 8858 / NBRC 14720 / NCIMB 2260 / Gabara) (Halobacterium pharaonis).